Here is a 329-residue protein sequence, read N- to C-terminus: UDP-2,3-diacylglucosamine pyrophosphatase LpxG (329 aa).

Residues 2 to 24 (FVFVGSTVSLTAIVAAPVLTWIW) traverse the membrane as a helical segment. A divalent metal cation-binding residues include Asp-59, His-61, Asp-91, Asn-123, His-257, and His-259.

This sequence belongs to the metallophosphoesterase superfamily. Requires Mn(2+) as cofactor.

The protein localises to the cell inner membrane. It catalyses the reaction UDP-2,3-diacyl-alpha-D-glucosamine + H2O = 2,3-diacyl-alpha-D-glucosaminyl 1-phosphate + UMP + 2 H(+). It participates in glycolipid biosynthesis; lipid IV(A) biosynthesis. Hydrolyzes the pyrophosphate bond of UDP-2,3-diacylglucosamine to form 2,3-diacylglucosamine 1-phosphate (lipid X) and UMP by catalyzing the attack of water at the alpha-P atom. Involved in the biosynthesis of lipid A, a phosphorylated glycolipid that anchors the lipooligosaccharide (LOS) to the outer membrane of the cell. The polypeptide is UDP-2,3-diacylglucosamine pyrophosphatase LpxG (Chlamydia muridarum (strain MoPn / Nigg)).